The following is a 244-amino-acid chain: Purine nucleoside phosphorylase HI_0175 (244 aa).

Residues His70, Cys105, and His122 each coordinate Zn(2+).

This sequence belongs to the purine nucleoside phosphorylase YfiH/LACC1 family. Homodimer. Cu(2+) is required as a cofactor. Zn(2+) serves as cofactor.

It catalyses the reaction adenosine + phosphate = alpha-D-ribose 1-phosphate + adenine. The catalysed reaction is S-methyl-5'-thioadenosine + phosphate = 5-(methylsulfanyl)-alpha-D-ribose 1-phosphate + adenine. The enzyme catalyses inosine + phosphate = alpha-D-ribose 1-phosphate + hypoxanthine. It carries out the reaction adenosine + H2O + H(+) = inosine + NH4(+). In terms of biological role, purine nucleoside enzyme that catalyzes the phosphorolysis of adenosine and inosine nucleosides, yielding D-ribose 1-phosphate and the respective free bases, adenine and hypoxanthine. Also catalyzes the phosphorolysis of S-methyl-5'-thioadenosine into adenine and S-methyl-5-thio-alpha-D-ribose 1-phosphate. Also has adenosine deaminase activity. This Haemophilus influenzae (strain ATCC 51907 / DSM 11121 / KW20 / Rd) protein is Purine nucleoside phosphorylase HI_0175.